Here is a 626-residue protein sequence, read N- to C-terminus: Chaperone protein HtpG (626 aa).

An a; substrate-binding region spans residues 1 to 341 (METKQFKAES…SEDLSLNISR (341 aa)). The tract at residues 342 to 552 (EILQHDRQLK…EGELSIEMEK (211 aa)) is b. The interval 490–509 (DLGIEGEEKENTSNSDDKEN) is disordered. Basic and acidic residues predominate over residues 498–509 (KENTSNSDDKEN). Residues 553 to 626 (VLNAMPNNQN…FTNNICKIMK (74 aa)) form a c region.

It belongs to the heat shock protein 90 family. Homodimer.

It is found in the cytoplasm. Molecular chaperone. Has ATPase activity. The sequence is that of Chaperone protein HtpG from Clostridium botulinum (strain ATCC 19397 / Type A).